A 91-amino-acid polypeptide reads, in one-letter code: Small ribosomal subunit protein uS19 (91 aa).

The protein belongs to the universal ribosomal protein uS19 family.

Protein S19 forms a complex with S13 that binds strongly to the 16S ribosomal RNA. The polypeptide is Small ribosomal subunit protein uS19 (Pseudomonas putida (strain ATCC 700007 / DSM 6899 / JCM 31910 / BCRC 17059 / LMG 24140 / F1)).